We begin with the raw amino-acid sequence, 550 residues long: Chaperonin GroEL (550 aa).

Residues 30-33 (TLGP), K51, 87-91 (DGTTT), G416, 480-482 (NVA), and D496 contribute to the ATP site. Positions 525 to 550 (LPKKDDEGGGGDMGGMGGMGGMGGMM) are disordered. The span at 534-550 (GGDMGGMGGMGGMGGMM) shows a compositional bias: gly residues.

It belongs to the chaperonin (HSP60) family. Forms a cylinder of 14 subunits composed of two heptameric rings stacked back-to-back. Interacts with the co-chaperonin GroES.

It is found in the cytoplasm. It catalyses the reaction ATP + H2O + a folded polypeptide = ADP + phosphate + an unfolded polypeptide.. Functionally, together with its co-chaperonin GroES, plays an essential role in assisting protein folding. The GroEL-GroES system forms a nano-cage that allows encapsulation of the non-native substrate proteins and provides a physical environment optimized to promote and accelerate protein folding. This chain is Chaperonin GroEL, found in Halorhodospira halophila (strain DSM 244 / SL1) (Ectothiorhodospira halophila (strain DSM 244 / SL1)).